A 541-amino-acid chain; its full sequence is Chaperonin GroEL (541 aa).

ATP contacts are provided by residues Thr29 to Pro32, Lys50, Asp86 to Thr90, Gly416, and Asp498.

It belongs to the chaperonin (HSP60) family. As to quaternary structure, forms a cylinder of 14 subunits composed of two heptameric rings stacked back-to-back. Interacts with the co-chaperonin GroES.

Its subcellular location is the cytoplasm. It catalyses the reaction ATP + H2O + a folded polypeptide = ADP + phosphate + an unfolded polypeptide.. In terms of biological role, together with its co-chaperonin GroES, plays an essential role in assisting protein folding. The GroEL-GroES system forms a nano-cage that allows encapsulation of the non-native substrate proteins and provides a physical environment optimized to promote and accelerate protein folding. This Anaplasma phagocytophilum (Ehrlichia phagocytophila) protein is Chaperonin GroEL.